We begin with the raw amino-acid sequence, 499 residues long: Probable dipeptidase B (499 aa).

Cys26 is a catalytic residue.

The protein belongs to the peptidase C69 family.

It carries out the reaction an L-aminoacyl-L-amino acid + H2O = 2 an L-alpha-amino acid. The protein is Probable dipeptidase B (pepDB) of Streptococcus pyogenes serotype M3 (strain ATCC BAA-595 / MGAS315).